The sequence spans 1302 residues: MAGVATPCANGCGPGAPSEAEVLHLCRSLEVGTVMTLFYSKKSQRPERKTFQVKLETRQITWSRGADKIEGSIDIREIKEIRPGKTSRDFDRYQEDPAFRPDQSHCFVILYGMEFRLKTLSLQATSEDEVNMWIKGLTWLMEDTLQAATPLQIERWLRKQFYSVDRNREDRISAKDLKNMLSQVNYRVPNMRFLRERLTDLEQRSGDITYGQFAQLYRSLMYSAQKTMDLPFLETNALRTGERPEHCQVSLSEFQQFLLEYQGELWAVDRLQVQEFMLSFLRDPLREIEEPYFFLDELVTFLFSKENSVWNSQLDAVCPDTMNNPLSHYWISSSHNTYLTGDQFSSESSLEAYARCLRMGCRCIELDCWDGPDGMPVIYHGHTLTTKIKFSDVLHTIKEHAFVASEYPVILSIEDHCSIAQQRNMAQHFRKVLGDTLLTKPVDIAADGLPSPNQLRRKILIKHKKLAEGSAYEEVPTSVMYSENDISNSIKNGILYLEDPVNHEWYPHYFVLTSSKIYYSEETSSDQGNEDEEEPKEASSSTELHSSEKWFHGKLGAGRDGRHIAERLLTEYCIETGAPDGSFLVRESETFVGDYTLSFWRNGKVQHCRIHSRQDAGTPKFFLTDNLVFDSLYDLITHYQQVPLRCNEFEMRLSEPVPQTNAHESKEWYHASLTRAQAEHMLMRVPRDGAFLVRKRNEPNSYAISFRAEGKIKHCRVQQEGQTVMLGNSEFDSLVDLISYYEKHPLYRKMKLRYPINEEALEKIGTAEPDYGALYEGRNPGFYVEANPMPTFKCAVKALFDYKAQREDELTFTKSAIIQNVEKQDGGWWRGDYGGKKQLWFPSNYVEEMINPAVLEPEREHLDENSPLGDLLRGVLDVPACQIAIRPEGKNNRLFVFSISMPSVAQWSLDVAADSQEELQDWVKKIREVAQTADARLTEGKMMERRKKIALELSELVVYCRPVPFDEEKIGTERACYRDMSSFPETKAEKYVNKAKGKKFLQYNRLQLSRIYPKGQRLDSSNYDPLPMWICGSQLVALNFQTPDKPMQMNQALFMAGGHCGYVLQPSTMRDEAFDPFDKSSLRGLEPCVICIEVLGARHLPKNGRGIVCPFVEIEVAGAEYDSTKQKTEFVVDNGLNPVWPAKPFHFQISNPEFAFLRFVVYEEDMFSDQNFLAQATFPVKGLKTGYRAVPLKNNYSEDLELASLLIKIDIFPAKENGDLSPFSGISLRERASDASSQLFHVRAREGSFEARYQQPFEDFRISQEHLADHFDSRERSTSDGPSSATNLIEDPLHDKLWKCSL.

N-acetylalanine is present on Ala2. One can recognise a PH 1 domain in the interval 27–142 (RSLEVGTVMT…WIKGLTWLME (116 aa)). An EF-hand domain is found at 152–187 (QIERWLRKQFYSVDRNREDRISAKDLKNMLSQVNYR). Ca(2+)-binding residues include Asp165, Asn167, Glu169, Arg171, and Asp176. Residues 320–464 (DTMNNPLSHY…LRRKILIKHK (145 aa)) form the PI-PLC X-box domain. Active-site residues include His335 and His380. One can recognise a PH 2; first part domain in the interval 489-523 (SIKNGILYLEDPVNHEWYPHYFVLTSSKIYYSEET). The residue at position 506 (Tyr506) is a Phosphotyrosine. The interval 522-545 (ETSSDQGNEDEEEPKEASSSTELH) is disordered. SH2 domains follow at residues 550–657 (WFHG…SEPV) and 668–756 (WYHA…RYPI). Phosphotyrosine; by SYK is present on Tyr771. Tyr775 is modified (phosphotyrosine). Residue Tyr783 is modified to Phosphotyrosine; by ITK, SYK and TXK. The SH3 domain maps to 791–851 (TFKCAVKALF…PSNYVEEMIN (61 aa)). The 37-residue stretch at 895 to 931 (FVFSISMPSVAQWSLDVAADSQEELQDWVKKIREVAQ) folds into the PH 2; second part domain. One can recognise a PI-PLC Y-box domain in the interval 953 to 1070 (LSELVVYCRP…GYVLQPSTMR (118 aa)). Phosphotyrosine is present on Tyr977. The 124-residue stretch at 1071–1194 (DEAFDPFDKS…TGYRAVPLKN (124 aa)) folds into the C2 domain. Phosphoserine is present on residues Ser1221, Ser1227, Ser1233, and Ser1248. Tyr1253 carries the phosphotyrosine modification. A Phosphoserine modification is found at Ser1263.

In terms of assembly, interacts (via SH2 domain) with FGFR1, FGFR2, FGFR3 and FGFR4 (phosphorylated). Interacts with RALGPS1. Interacts (via SH2 domains) with VIL1 (phosphorylated at C-terminus tyrosine phosphorylation sites). Interacts (via SH2 domain) with RET. Interacts with AGAP2 via its SH3 domain. Interacts with LAT (phosphorylated) upon TCR activation. Interacts (via SH3 domain) with the Pro-rich domain of TNK1. Associates with BLNK, VAV1, GRB2 and NCK1 in a B-cell antigen receptor-dependent fashion. Interacts with CBLB in activated T-cells; which inhibits phosphorylation. Interacts with SHB. Interacts (via SH3 domain) with the Arg/Gly-rich-flanked Pro-rich domains of KHDRBS1/SAM68. This interaction is selectively regulated by arginine methylation of KHDRBS1/SAM68. Interacts with INPP5D/SHIP1, THEMIS and CLNK. Interacts with FLT4 and KIT. Interacts with AXL. Interacts with SYK; activates PLCG1. Interacts with FLT1 (tyrosine-phosphorylated). Interacts (via SH2 domain) with PDGFRA and PDGFRB (tyrosine phosphorylated). Interacts with PIP5K1C. Interacts with NTRK1 and NTRK2 (phosphorylated upon ligand-binding). Interacts with TESPA1. Interacts with GRB2, LAT and THEMIS upon TCR activation in thymocytes; the association is weaker in the absence of TESPA1. Interacts (via C-terminal proline-rich domain (PRD)) with PLCG1 (via SH3 domain); this interaction leads to guanine nucleotide exchange from PlCG1 to DNM1 and enhances DNM1-dependent endocytosis. Ca(2+) is required as a cofactor. Post-translationally, tyrosine phosphorylated in response to signaling via activated FLT3, KIT and PDGFRA. Tyrosine phosphorylated by activated FGFR1, FGFR2, FGFR3 and FGFR4. Tyrosine phosphorylated by activated FLT1 and KDR. Tyrosine phosphorylated by activated PDGFRB. The receptor-mediated activation of PLCG1 involves its phosphorylation by tyrosine kinases in response to ligation of a variety of growth factor receptors and immune system receptors. For instance, SYK phosphorylates and activates PLCG1 in response to ligation of the B-cell receptor. Phosphorylated by ITK and TXK on Tyr-783 upon TCR activation in T-cells. May be dephosphorylated by PTPRJ. Ubiquitinated by CBLB in activated T-cells.

The protein resides in the cell projection. The protein localises to the lamellipodium. It localises to the ruffle. The enzyme catalyses a 1,2-diacyl-sn-glycero-3-phospho-(1D-myo-inositol-4,5-bisphosphate) + H2O = 1D-myo-inositol 1,4,5-trisphosphate + a 1,2-diacyl-sn-glycerol + H(+). It carries out the reaction a 1,2-diacyl-sn-glycero-3-phospho-(1D-myo-inositol) + H2O = 1D-myo-inositol 1-phosphate + a 1,2-diacyl-sn-glycerol + H(+). Activated by phosphorylation on tyrosine residues. In terms of biological role, mediates the production of the second messenger molecules diacylglycerol (DAG) and inositol 1,4,5-trisphosphate (IP3). Plays an important role in the regulation of intracellular signaling cascades. Becomes activated in response to ligand-mediated activation of receptor-type tyrosine kinases, such as PDGFRA, PDGFRB, EGFR, FGFR1, FGFR2, FGFR3 and FGFR4. Plays a role in actin reorganization and cell migration. Guanine nucleotide exchange factor that binds the GTPase DNM1 and catalyzes the dissociation of GDP, allowing a GTP molecule to bind in its place, therefore enhancing DNM1-dependent endocytosis. This is 1-phosphatidylinositol 4,5-bisphosphate phosphodiesterase gamma-1 from Mus musculus (Mouse).